The following is a 547-amino-acid chain: Undecaprenyl phosphate-alpha-4-amino-4-deoxy-L-arabinose arabinosyl transferase (547 aa).

Transmembrane regions (helical) follow at residues 1-21 (MKLT…LPLD), 83-103 (FASA…ALQL), 111-131 (FLAG…TYSV), 174-194 (FLTK…PYVI), 205-225 (FGPL…IAVH), 253-273 (APFW…LGLL), 286-306 (ISPE…FFSV), 311-331 (LLTY…ASAV), 346-366 (AWLN…LALS), 378-398 (GALA…FIQL), and 408-428 (SALC…QSLI).

This sequence belongs to the glycosyltransferase 83 family.

Its subcellular location is the cell inner membrane. The catalysed reaction is 4-amino-4-deoxy-alpha-L-arabinopyranosyl di-trans,octa-cis-undecaprenyl phosphate + lipid IVA = lipid IIA + di-trans,octa-cis-undecaprenyl phosphate.. It functions in the pathway lipopolysaccharide metabolism; 4-amino-4-deoxy-beta-L-arabinose-lipid A biosynthesis. Its function is as follows. Catalyzes the transfer of the L-Ara4N moiety of the glycolipid undecaprenyl phosphate-alpha-L-Ara4N to lipid A. The modified arabinose is attached to lipid A and is required for resistance to polymyxin and cationic antimicrobial peptides. The chain is Undecaprenyl phosphate-alpha-4-amino-4-deoxy-L-arabinose arabinosyl transferase from Aeromonas salmonicida (strain A449).